We begin with the raw amino-acid sequence, 454 residues long: Jacalin-related lectin 37 (454 aa).

The Jacalin-type lectin domain maps to 295 to 438; it reads SRFTPPRGIQ…LTALGVHFSP (144 aa).

Belongs to the jacalin lectin family.

The polypeptide is Jacalin-related lectin 37 (JAL37) (Arabidopsis thaliana (Mouse-ear cress)).